We begin with the raw amino-acid sequence, 209 residues long: Protein TIC 20-v, chloroplastic (209 aa).

The transit peptide at 1 to 49 directs the protein to the chloroplast; the sequence is MAIISQFFAPLPSLTGTLTLTGRSFLPLNLDTQFPKPRLSRDRAATLVL. 4 helical membrane passes run 63–83, 103–123, 132–152, and 173–193; these read IISA…GKFI, AFKS…FVVV, VRFN…PDLL, and TVFL…LFGL.

Belongs to the Tic20 family. In terms of assembly, part of the Tic complex. Expressed in leaves, siliques and roots.

It is found in the plastid. Its subcellular location is the chloroplast inner membrane. May be involved in protein precursor import into chloroplasts. Not redundant with TIC20-I, TIC20-II or TIC20-IV. The sequence is that of Protein TIC 20-v, chloroplastic (TIC20-V) from Arabidopsis thaliana (Mouse-ear cress).